The following is a 685-amino-acid chain: Putative alpha-1,3-mannosyltransferase MNN14 (685 aa).

At 1 to 13 (MGLLSIPYQSKSK) the chain is on the cytoplasmic side. Residues 14–34 (LWIAIFLVVWSLISMHFIWQS) form a helical membrane-spanning segment. Residues 35–685 (QANSGLILKN…EIWMRGYNYL (651 aa)) are Lumenal-facing. Residues N199, N338, N408, and N556 are each glycosylated (N-linked (GlcNAc...) asparagine).

It belongs to the MNN1/MNT family.

The protein localises to the golgi apparatus membrane. It participates in protein modification; protein glycosylation. Responsible for addition of the terminal mannose residues to the outer chain of core N-linked polysaccharides and to O-linked mannotriose. Implicated in late Golgi modifications. Involved in virulence. The protein is Putative alpha-1,3-mannosyltransferase MNN14 (MNN14) of Candida albicans (strain SC5314 / ATCC MYA-2876) (Yeast).